A 128-amino-acid polypeptide reads, in one-letter code: Large ribosomal subunit protein bL20c (128 aa).

The protein belongs to the bacterial ribosomal protein bL20 family.

The protein localises to the plastid. It localises to the chloroplast. Binds directly to 23S ribosomal RNA and is necessary for the in vitro assembly process of the 50S ribosomal subunit. It is not involved in the protein synthesizing functions of that subunit. This chain is Large ribosomal subunit protein bL20c, found in Nicotiana sylvestris (Wood tobacco).